The chain runs to 269 residues: Serine/arginine-rich splicing factor 5 (269 aa).

Residues 4–74 (CRVFIGRLNP…ERVTIEHARA (71 aa)) form the RRM 1 domain. Residues 73–105 (RARSRGGRGRGRYSDRFSSRRPRNDRRNAPPVR) form a disordered region. Over residues 74-83 (ARSRGGRGRG) the composition is skewed to basic residues. Residue S86 is modified to Phosphoserine. An RRM 2 domain is found at 108-189 (NRLIVENLSS…SKRHRSRSRS (82 aa)). Position 167 is an N6-acetyllysine (K167). Positions 174–269 (IKLIEGSKRH…SRSRSVDSGN (96 aa)) are disordered. The segment covering 181-226 (KRHRSRSRSRSRTRSSSRSRSRSRSRRSKSYSRSRSRSRSRSKSRS) has biased composition (basic residues). Phosphoserine occurs at positions 224, 226, 230, 247, and 250. The span at 239-251 (RGSSSRSKSPASV) shows a compositional bias: low complexity.

It belongs to the splicing factor SR family. As to quaternary structure, found in a pre-mRNA splicing complex with SRSF4/SFRS4, SRSF5/SFRS5, SNRNP70, SNRPA1, SRRM1 and SRRM2. Interacts with RBMY; the interaction inhibits SRSF5 pre-mRNA splicing. Interacts (via RS domain) with PHF5A (via N-terminus). Extensively phosphorylated on serine residues in the RS domain.

It localises to the nucleus. May be required for progression through G1 and entry into S phase of cell growth. May play a regulatory role in pre-mRNA splicing. Autoregulates its own expression. Plays a role in constitutive splicing and can modulate the selection of alternative splice sites. The chain is Serine/arginine-rich splicing factor 5 (Srsf5) from Mus musculus (Mouse).